Reading from the N-terminus, the 102-residue chain is MSDFLSELWLVIKKRIEEKPQGSYTAEIVKRGLPFAARKFGEESVELIVASLSEPRDSVIYEAADVIYHLMVLLALRGVDWAEVIKELERRSRAKSGAGGNS.

The protein belongs to the PRA-PH family.

It localises to the cytoplasm. It carries out the reaction 1-(5-phospho-beta-D-ribosyl)-ATP + H2O = 1-(5-phospho-beta-D-ribosyl)-5'-AMP + diphosphate + H(+). Its pathway is amino-acid biosynthesis; L-histidine biosynthesis; L-histidine from 5-phospho-alpha-D-ribose 1-diphosphate: step 2/9. In Ignicoccus hospitalis (strain KIN4/I / DSM 18386 / JCM 14125), this protein is Phosphoribosyl-ATP pyrophosphatase.